The chain runs to 227 residues: MNCLEKITNEYGQKTASRLEQFVKLIEEENKKINLTSFEGQRLWQEGIYESIKCLEPFVKSNDSLLDIGAGVGFPSVPFLIVNPEVKLTIIESNKKRVLFLEKVKKDLNLSFEIFNGRVENFNKEIHFDFITARALAPLNILMELTINLGSILPKPTNYIFVKGANYLSELNEAQNAIKILKLKVFDLKKIDVFFDKNIFMIHYIKTANVSKEYPRAWDKIIKKPIR.

S-adenosyl-L-methionine-binding positions include G69, F74, 119–120 (VE), and R134.

The protein belongs to the methyltransferase superfamily. RNA methyltransferase RsmG family.

It localises to the cytoplasm. Its function is as follows. Specifically methylates the N7 position of a guanine in 16S rRNA. The chain is Ribosomal RNA small subunit methyltransferase G from Mycoplasmopsis pulmonis (strain UAB CTIP) (Mycoplasma pulmonis).